The following is a 547-amino-acid chain: Apolipoprotein N-acyltransferase (547 aa).

Transmembrane regions (helical) follow at residues 31 to 51 (ILSG…ALIF), 71 to 91 (FWAG…WIAY), 106 to 126 (LALL…VAAG), 180 to 200 (LVGF…MGYV), and 210 to 230 (ALSH…WGFW). The CN hydrolase domain maps to 247 to 515 (VQANIGNLEK…KYLKNAPLTF (269 aa)). The Proton acceptor role is filled by Glu-294. Residue Lys-364 is part of the active site. Cys-418 functions as the Nucleophile in the catalytic mechanism. The helical transmembrane segment at 515–535 (FFVQWGHWDWIVILLVLGAVI) threads the bilayer.

Belongs to the CN hydrolase family. Apolipoprotein N-acyltransferase subfamily.

It localises to the cell inner membrane. The catalysed reaction is N-terminal S-1,2-diacyl-sn-glyceryl-L-cysteinyl-[lipoprotein] + a glycerophospholipid = N-acyl-S-1,2-diacyl-sn-glyceryl-L-cysteinyl-[lipoprotein] + a 2-acyl-sn-glycero-3-phospholipid + H(+). It participates in protein modification; lipoprotein biosynthesis (N-acyl transfer). Functionally, catalyzes the phospholipid dependent N-acylation of the N-terminal cysteine of apolipoprotein, the last step in lipoprotein maturation. The chain is Apolipoprotein N-acyltransferase from Bdellovibrio bacteriovorus (strain ATCC 15356 / DSM 50701 / NCIMB 9529 / HD100).